The sequence spans 72 residues: Translation initiation factor IF-1 (72 aa).

Residues Met1 to Lys72 enclose the S1-like domain.

This sequence belongs to the IF-1 family. As to quaternary structure, component of the 30S ribosomal translation pre-initiation complex which assembles on the 30S ribosome in the order IF-2 and IF-3, IF-1 and N-formylmethionyl-tRNA(fMet); mRNA recruitment can occur at any time during PIC assembly.

The protein resides in the cytoplasm. Functionally, one of the essential components for the initiation of protein synthesis. Stabilizes the binding of IF-2 and IF-3 on the 30S subunit to which N-formylmethionyl-tRNA(fMet) subsequently binds. Helps modulate mRNA selection, yielding the 30S pre-initiation complex (PIC). Upon addition of the 50S ribosomal subunit IF-1, IF-2 and IF-3 are released leaving the mature 70S translation initiation complex. The polypeptide is Translation initiation factor IF-1 (Bartonella bacilliformis (strain ATCC 35685 / KC583 / Herrer 020/F12,63)).